The sequence spans 417 residues: Acetyltransferase nanB (417 aa).

The signal sequence occupies residues 1 to 24 (MRPSTTTLSLLVFLISSILLATTG). Helical transmembrane passes span 150–170 (LAVS…LKNI), 284–304 (YLNN…FNWI), 307–327 (VQDG…GYFL), 356–376 (VGAL…VYPF), and 389–409 (FVDV…AAAL).

Belongs to the wax synthase family.

It is found in the membrane. The protein operates within secondary metabolite biosynthesis. Functionally, acetyltransferase; part of the gene cluster that mediates the biosynthesis of the benzazepine alkaloid nanangelenin A which contains an unprecedented 3,4-dihydro-1-benzazepine-2,5-dione-N-prenyl-N-acetoxy-anthranilamide scaffold. The first step of nanangelenin biosynthesis is catalyzed by the indoleamine 2,3-dioxygenase nanC which produces N-formyl-kynurenine through the catabolism of tryptophan. The two-module NRPS nanA then utilizes anthranilate (Ant) and L-kynurenine (L-Kyn) to assemble the dipeptide product nanangelenin B. The first adenylation domain of nanA (A1) loads anthranilate onto the T1 domain, while A2 loads kynurenine, generated through spontaneous nonenzymatic deformylation of the nanC-supplied N-formyl-kynurenine. The peptide bond formation between the tethered amino acids is catalyzed by the first condensation domain (C1) between anthranilate's carbonyl carbon and kynurenine's aliphatic primary amine. The second C domain (C2) catalyzes the final cyclization event between the aromatic amine of kynurenine and the tethered carbonyl carbon, yielding nanangelenin B. The terminal T3 domain enhances the catalytic efficiency of C2, suggesting the T2-tethered Ant-L-Kyn is transferred to T3 prior to cyclization by C2. Once released from nanA, nanangelenin B is then prenylated by the prenyltransferase nanD to form nanangelenin C. Nanangelenin C is then N-hydroxylated by the FAD-dependent monooxygenase nanF and further acetylated by the acetyltransferase nanB to yield nanangelenin F. Finally, the N-methyltransferase nanE methylates the amide nitrogen of 1-benzazepine to convert nanangelenin F into nanangelenin A. NanE is also able to methylate most of the intermediates of the pathway such as nanangelenin B and nanangelenin C to produce nanangelenin D and nanangelenin E, respectively. In Aspergillus nanangensis, this protein is Acetyltransferase nanB.